Here is a 319-residue protein sequence, read N- to C-terminus: ATP-dependent 6-phosphofructokinase (319 aa).

ATP is bound at residue G11. Position 21-25 (21-25) interacts with ADP; that stretch reads RAAVR. Residues 72–73 and 102–105 each bind ATP; these read RS and GDGS. D103 contributes to the Mg(2+) binding site. 125 to 127 provides a ligand contact to substrate; that stretch reads TID. The active-site Proton acceptor is D127. Position 154 (R154) interacts with ADP. Substrate is bound by residues R162 and 169 to 171; that span reads MGR. ADP is bound by residues 185–187, R211, and 213–215; these read GAE and KKH. Substrate-binding positions include E222, R243, and 249-252; that span reads HIQR.

Belongs to the phosphofructokinase type A (PFKA) family. ATP-dependent PFK group I subfamily. Prokaryotic clade 'B1' sub-subfamily. As to quaternary structure, homotetramer. It depends on Mg(2+) as a cofactor.

It is found in the cytoplasm. The catalysed reaction is beta-D-fructose 6-phosphate + ATP = beta-D-fructose 1,6-bisphosphate + ADP + H(+). Its pathway is carbohydrate degradation; glycolysis; D-glyceraldehyde 3-phosphate and glycerone phosphate from D-glucose: step 3/4. Its activity is regulated as follows. Allosterically activated by ADP and other diphosphonucleosides, and allosterically inhibited by phosphoenolpyruvate. Its function is as follows. Catalyzes the phosphorylation of D-fructose 6-phosphate to fructose 1,6-bisphosphate by ATP, the first committing step of glycolysis. This is ATP-dependent 6-phosphofructokinase from Brevibacillus brevis (strain 47 / JCM 6285 / NBRC 100599).